Here is a 606-residue protein sequence, read N- to C-terminus: DNA mismatch repair protein MutL (606 aa).

The tract at residues 377–401 (HRPLFAPQPAPQPDREPPLPDSGSR) is disordered.

The protein belongs to the DNA mismatch repair MutL/HexB family.

Its function is as follows. This protein is involved in the repair of mismatches in DNA. It is required for dam-dependent methyl-directed DNA mismatch repair. May act as a 'molecular matchmaker', a protein that promotes the formation of a stable complex between two or more DNA-binding proteins in an ATP-dependent manner without itself being part of a final effector complex. This Geobacter sulfurreducens (strain ATCC 51573 / DSM 12127 / PCA) protein is DNA mismatch repair protein MutL.